A 303-amino-acid chain; its full sequence is MSLDTSSSAIHLQLPPTSSSLRPPSQITVHPSVIAQILTHHSRHSADSESTRVIGALMGNRSDNGQEVDIRSCFAVPHTEQGQQISVDRPFQQDMVNFLAKNGTKEVIVGWYASQKTVNSNSAIIQEYFSFETNPYPAVHLTVDTDIEESGKGLGVKGWVSQPLGLTSKSECSVFVPVPVSIKYADSERAALDLLTAPQPTPSPALPPLPTLSNSLSQLSSLIDQCLAYVQSVNNGSQTPDVEIGRYLLEGLGRWSASGNEDEGGVKAGLQDTLTVEYLSSLVRSQVELAGRLSLLQQPVAQQ.

Over residues 1–10 the composition is skewed to polar residues; that stretch reads MSLDTSSSAI. The tract at residues 1–25 is disordered; the sequence is MSLDTSSSAIHLQLPPTSSSLRPPS. The span at 12 to 25 shows a compositional bias: low complexity; sequence LQLPPTSSSLRPPS. The MPN domain maps to 27–165; it reads ITVHPSVIAQ…VKGWVSQPLG (139 aa).

It belongs to the eIF-3 subunit F family. Component of the eukaryotic translation initiation factor 3 (eIF-3) complex.

The protein localises to the cytoplasm. Its function is as follows. Component of the eukaryotic translation initiation factor 3 (eIF-3) complex, which is involved in protein synthesis of a specialized repertoire of mRNAs and, together with other initiation factors, stimulates binding of mRNA and methionyl-tRNAi to the 40S ribosome. The eIF-3 complex specifically targets and initiates translation of a subset of mRNAs involved in cell proliferation. This chain is Eukaryotic translation initiation factor 3 subunit F, found in Cryptococcus neoformans var. neoformans serotype D (strain B-3501A) (Filobasidiella neoformans).